The following is a 384-amino-acid chain: L-aspartate decarboxylase (384 aa).

Residue lysine 231 is modified to N6-(pyridoxal phosphate)lysine.

It belongs to the group II decarboxylase family. MfnA subfamily. Homodimer. Can also form homohexamers. Requires pyridoxal 5'-phosphate as cofactor.

It catalyses the reaction L-aspartate + H(+) = beta-alanine + CO2. Its pathway is cofactor biosynthesis; coenzyme A biosynthesis. Inhibited by hydroxylamine. Its function is as follows. Catalyzes the decarboxylation of L-aspartate to produce beta-alanine. In vitro, can also catalyze the decarboxylation of L-glutamate to produce 4-aminobutanoate, but this activity does not seem necessary in vivo. Shows much higher activity with L-aspartate than with L-glutamate. Does not decarboxylate L-tyrosine. The chain is L-aspartate decarboxylase from Thermococcus kodakarensis (strain ATCC BAA-918 / JCM 12380 / KOD1) (Pyrococcus kodakaraensis (strain KOD1)).